The primary structure comprises 229 residues: Lipoprotein-releasing system ATP-binding protein LolD (229 aa).

The ABC transporter domain occupies 9-228; that stretch reads HGLRKIYREA…QDGNLVQVEV (220 aa). 42–49 lines the ATP pocket; sequence GSSGSGKS.

It belongs to the ABC transporter superfamily. Lipoprotein translocase (TC 3.A.1.125) family. In terms of assembly, the complex is composed of two ATP-binding proteins (LolD) and two transmembrane proteins (LolC and LolE).

Its subcellular location is the cell inner membrane. Its function is as follows. Part of the ABC transporter complex LolCDE involved in the translocation of mature outer membrane-directed lipoproteins, from the inner membrane to the periplasmic chaperone, LolA. Responsible for the formation of the LolA-lipoprotein complex in an ATP-dependent manner. This chain is Lipoprotein-releasing system ATP-binding protein LolD, found in Photobacterium profundum (strain SS9).